The chain runs to 324 residues: Hydroxylase/desaturase CTB9 (324 aa).

The span at M1–L11 shows a compositional bias: polar residues. 2 disordered regions span residues M1–P33 and T288–A308.

Belongs to the asaB hydroxylase/desaturase family.

It participates in mycotoxin biosynthesis. In terms of biological role, hydroxylase/desaturase; part of the gene cluster that mediates the biosynthesis of cercosporin, a light-activated, non-host-selective toxin. The perylenequinone chromophore of cercosporin absorbs light energy to attain an electronically-activated triplet state and produces active oxygen species such as the hydroxyl radical, superoxide, hydrogen peroxide or singlet oxygen upon reaction with oxygen molecules. These reactive oxygen species cause damage to various cellular components including lipids, proteins and nucleic acids. The first step of cercosporin biosynthesis is performed by the polyketide synthase CTB1 which catalyzes the formation of nor-toralactone. The starter unit acyltransferase (SAT) domain of CTB1 initiates polyketide extension by the selective utilization of acetyl-CoA, which is elongated to the heptaketide in the beta-ketoacyl synthase (KS) domain by successive condensations with six malonyl units introduced by the malonyl acyltransferase (MAT) domain. The product template (PT) domain catalyzes C4-C9 and C2-C11 aldol cyclizations and dehydrations to a trihydroxynaphthalene, which is thought to be delivered to the thioesterase (TE) domain for product release. The bifunctional enzyme CTB3 then methylates nor-toralactone to toralactone before conducting an unusual oxidative aromatic ring opening. The O-methyltransferase CTB2 further methylates the nascent OH-6 of the CBT3 product, blocking further oxidation at this site before the reductase CTB6 reduces the 2-oxopropyl ketone at position C7, giving naphthalene. The FAD-dependent monooxygenase CTB5 in concert with the multicopper oxidase CTB12 are responsible for homodimerization of naphthalene with CTB7 installing the dioxepine moiety, finally producing cercosporin. The fasciclin domain-containing protein CTB11 might act with CTB5 and CTB12 whereas the roles of CTB9 and CTB10 have still to be elucidated. This Cercospora beticola (Sugarbeet leaf spot fungus) protein is Hydroxylase/desaturase CTB9.